We begin with the raw amino-acid sequence, 169 residues long: MFTNTRTILIYNSKVMNTHTHTHTHTHTHIYIYTGDQVSVRGRLLSLKFFKVLKLFFPSPTSLATSHPPLSSMSPYMTIPQQYLYISKIRSKLSQCALTRHHHRELDLRKMVGHANMLDRILDEIDEIDSEVVLCDAADGSSTAEAHSASPASSDSSPLTNNIRPISIM.

Positions 144–157 (AEAHSASPASSDSS) are enriched in low complexity. Residues 144–169 (AEAHSASPASSDSSPLTNNIRPISIM) are disordered. Residues 158 to 169 (PLTNNIRPISIM) are compositionally biased toward polar residues.

This is an uncharacterized protein from Saccharomyces cerevisiae (strain ATCC 204508 / S288c) (Baker's yeast).